The following is a 708-amino-acid chain: Ribosomal RNA large subunit methyltransferase K/L (708 aa).

In terms of domain architecture, THUMP spans 43–154 (QIYRCCLWSR…KENALLGIDM (112 aa)).

The protein belongs to the methyltransferase superfamily. RlmKL family.

It is found in the cytoplasm. The catalysed reaction is guanosine(2445) in 23S rRNA + S-adenosyl-L-methionine = N(2)-methylguanosine(2445) in 23S rRNA + S-adenosyl-L-homocysteine + H(+). It carries out the reaction guanosine(2069) in 23S rRNA + S-adenosyl-L-methionine = N(2)-methylguanosine(2069) in 23S rRNA + S-adenosyl-L-homocysteine + H(+). Specifically methylates the guanine in position 2445 (m2G2445) and the guanine in position 2069 (m7G2069) of 23S rRNA. The sequence is that of Ribosomal RNA large subunit methyltransferase K/L from Vibrio cholerae serotype O1 (strain ATCC 39541 / Classical Ogawa 395 / O395).